The chain runs to 495 residues: UPF0371 protein CE2832 (495 aa).

Belongs to the UPF0371 family.

The chain is UPF0371 protein CE2832 from Corynebacterium efficiens (strain DSM 44549 / YS-314 / AJ 12310 / JCM 11189 / NBRC 100395).